The chain runs to 495 residues: N-succinylglutamate 5-semialdehyde dehydrogenase (495 aa).

Residue 228–233 (GSYATG) participates in NAD(+) binding. Residues glutamate 251 and cysteine 285 contribute to the active site.

It belongs to the aldehyde dehydrogenase family. AstD subfamily.

The catalysed reaction is N-succinyl-L-glutamate 5-semialdehyde + NAD(+) + H2O = N-succinyl-L-glutamate + NADH + 2 H(+). It participates in amino-acid degradation; L-arginine degradation via AST pathway; L-glutamate and succinate from L-arginine: step 4/5. Its function is as follows. Catalyzes the NAD-dependent reduction of succinylglutamate semialdehyde into succinylglutamate. The polypeptide is N-succinylglutamate 5-semialdehyde dehydrogenase (Legionella pneumophila (strain Corby)).